The sequence spans 424 residues: MLDLRYIRENAEAVKKNCRDRGVEADVDLVVELADRRSALIRELEGLRARQNQLAKAVAKERDERSRGRLIEESRELKGLIPRREEELRGVEERLAEEQLKIPNMTHPEAPVGRDDSENVEIRRWGEAPEFGFEPKDHVELGEALGIIDFDAGAKTTGSKFYFLRGEAVLLELGLVRFALDLLAGRGYELAMTPDLARDRMLLGTGFVPRGPETQIYSVENTDLSLIATAEITLAGQLVDEIVAEESLPRRFAGLSHCFRTEAGAHGRASRGLYRVHQFTKVEMFAFTTPEQSGEMHEEMLSIEEEIFRTLEIPYRVVDICTGDLGAAAYRKYDVEAWMPGRGDYGEVTSTSNTTDYQARRLGIRYRPEGGRPRLLHTLNGTAIAVSRTMIALLENHQREDGSVALPEALVPYVGREVIGPARR.

229-231 provides a ligand contact to L-serine; it reads TAE. ATP contacts are provided by residues 260 to 262 and V276; that span reads RTE. E283 contacts L-serine. ATP is bound at residue 347–350; the sequence is EVTS. T382 lines the L-serine pocket.

Belongs to the class-II aminoacyl-tRNA synthetase family. Type-1 seryl-tRNA synthetase subfamily. In terms of assembly, homodimer. The tRNA molecule binds across the dimer.

It localises to the cytoplasm. It catalyses the reaction tRNA(Ser) + L-serine + ATP = L-seryl-tRNA(Ser) + AMP + diphosphate + H(+). The enzyme catalyses tRNA(Sec) + L-serine + ATP = L-seryl-tRNA(Sec) + AMP + diphosphate + H(+). The protein operates within aminoacyl-tRNA biosynthesis; selenocysteinyl-tRNA(Sec) biosynthesis; L-seryl-tRNA(Sec) from L-serine and tRNA(Sec): step 1/1. Its function is as follows. Catalyzes the attachment of serine to tRNA(Ser). Is also able to aminoacylate tRNA(Sec) with serine, to form the misacylated tRNA L-seryl-tRNA(Sec), which will be further converted into selenocysteinyl-tRNA(Sec). This is Serine--tRNA ligase from Rubrobacter xylanophilus (strain DSM 9941 / JCM 11954 / NBRC 16129 / PRD-1).